The sequence spans 457 residues: MLGAVKMEGHEPSDWSSYYAEPEGYSSVSNMNAGLGMNGMNTYMSMSAAAMGSGSGNMSAGSMNMSSYVGAGMSPSLAGMSPGAGAMAGMGGSAGAAGVAGMGPHLSPSLSPLGGQAAGAMGGLAPYANMNSMSPMYGQAGLSRARDPKTYRRSYTHAKPPYSYISLITMAIQQSPNKMLTLSEIYQWIMDLFPFYRQNQQRWQNSIRHSLSFNDCFLKVPRSPDKPGKGSFWTLHPDSGNMFENGCYLRRQKRFKCEKQLALKEAAGAAGSGKKAAAGAQASQAQLGEAAGPASETPAGTESPHSSASPCQEHKRGGLGELKGTPAAALSPPEPAPSPGQQQQAAAHLLGPPHHPGLPPEAHLKPEHHYAFNHPFSINNLMSSEQQHHHSHHHHQPHKMDLKAYEQVMHYPGYGSPMPGSLAMGPVTNKTGLDASPLAADTSYYQGVYSRPIMNSS.

The interval 14 to 93 is transactivation domain 1; the sequence is DWSSYYAEPE…AGAMAGMGGS (80 aa). The Nuclear localization signal signature appears at 106–113; the sequence is LSPSLSPL. Position 156 is a phosphothreonine (Thr156). The fork-head DNA-binding region spans 159-252; it reads KPPYSYISLI…FENGCYLRRQ (94 aa). 2 positions are modified to phosphoserine: Ser212 and Ser283. The span at 280–292 shows a compositional bias: low complexity; it reads AQASQAQLGEAAG. The interval 280–365 is disordered; that stretch reads AQASQAQLGE…PGLPPEAHLK (86 aa). Residues 298-310 show a composition bias toward polar residues; sequence PAGTESPHSSASP. Thr301 carries the phosphothreonine modification. A phosphoserine mark is found at Ser303, Ser306, Ser307, and Ser309. The span at 339 to 352 shows a compositional bias: low complexity; that stretch reads PGQQQQAAAHLLGP. A transactivation domain 2 region spans residues 361–457; the sequence is EAHLKPEHHY…VYSRPIMNSS (97 aa). Phosphoserine is present on residues Ser436 and Ser457.

As to quaternary structure, binds DNA as a monomer. Binds TLE1. Interacts with FOXA1 and FOXA3. Interacts with PRKDC. Interacts with AKT1. Interacts with TET1; this interaction may recruit TET1 to specific genomic loci to mediate their demethylation. Post-translationally, phosphorylation on Thr-156 abolishes binding to target promoters and subsequent transcription activation upon insulin stimulation.

It is found in the nucleus. It localises to the cytoplasm. Transcription factor that is involved in embryonic development, establishment of tissue-specific gene expression and regulation of gene expression in differentiated tissues. Is thought to act as a 'pioneer' factor opening the compacted chromatin for other proteins through interactions with nucleosomal core histones and thereby replacing linker histones at target enhancer and/or promoter sites. Binds DNA with the consensus sequence 5'-[AC]A[AT]T[AG]TT[GT][AG][CT]T[CT]-3'. In embryonic development is required for notochord formation. Involved in the development of multiple endoderm-derived organ systems such as the liver, pancreas and lungs; FOXA1 and FOXA2 seem to have at least in part redundant roles. Originally described as a transcription activator for a number of liver genes such as AFP, albumin, tyrosine aminotransferase, PEPCK, etc. Interacts with the cis-acting regulatory regions of these genes. Involved in glucose homeostasis; regulates the expression of genes important for glucose sensing in pancreatic beta-cells and glucose homeostasis. Involved in regulation of fat metabolism. Binds to fibrinogen beta promoter and is involved in IL6-induced fibrinogen beta transcriptional activation. The chain is Hepatocyte nuclear factor 3-beta (FOXA2) from Homo sapiens (Human).